The chain runs to 398 residues: Cytochrome b (398 aa).

The helical transmembrane segment at 45-65 (LGSIAGIALVIQIITGVILAM) threads the bilayer. Residues His95 and His109 each contribute to the heme b site. The next 8 helical transmembrane spans lie at 97–117 (VGAS…LYYG), 129–149 (IGII…VLPW), 164–184 (FSAI…GFSV), 192–212 (FFSL…LHLL), 245–265 (FVGF…EPNY), 304–324 (LAGV…PWLD), 335–355 (PIYR…GYLG), and 364–384 (IIIS…VLPL). His196 and His210 together coordinate heme b.

Belongs to the cytochrome b family. The main subunits of complex b-c1 are: cytochrome b, cytochrome c1 and the Rieske protein. Heme b serves as cofactor.

It is found in the cell membrane. In terms of biological role, component of the ubiquinol-cytochrome c reductase complex (complex III or cytochrome b-c1 complex), which is a respiratory chain that generates an electrochemical potential coupled to ATP synthesis. The protein is Cytochrome b (petB) of Rickettsia typhi (strain ATCC VR-144 / Wilmington).